Consider the following 926-residue polypeptide: Alanine--tRNA ligase (926 aa).

Zn(2+) contacts are provided by histidine 615, histidine 619, cysteine 719, and histidine 723. The interval 887-910 is disordered; the sequence is RVGGGGGGPPDFAQGGGPDADALD. The span at 888–904 shows a compositional bias: gly residues; it reads VGGGGGGPPDFAQGGGP.

This sequence belongs to the class-II aminoacyl-tRNA synthetase family. Zn(2+) serves as cofactor.

Its subcellular location is the cytoplasm. The catalysed reaction is tRNA(Ala) + L-alanine + ATP = L-alanyl-tRNA(Ala) + AMP + diphosphate. In terms of biological role, catalyzes the attachment of alanine to tRNA(Ala) in a two-step reaction: alanine is first activated by ATP to form Ala-AMP and then transferred to the acceptor end of tRNA(Ala). Also edits incorrectly charged Ser-tRNA(Ala) and Gly-tRNA(Ala) via its editing domain. This is Alanine--tRNA ligase from Halorubrum lacusprofundi (strain ATCC 49239 / DSM 5036 / JCM 8891 / ACAM 34).